Consider the following 188-residue polypeptide: Der GTPase-activating protein YihI (188 aa).

Disordered stretches follow at residues 1-80 (MKQP…VPVP) and 162-188 (DEDD…KDTF). Basic and acidic residues predominate over residues 27-37 (TRDELDAEARD). A compositionally biased stretch (polar residues) spans 47-57 (NRSGARTNVEG).

This sequence belongs to the YihI family. Interacts with Der.

In terms of biological role, a GTPase-activating protein (GAP) that modifies Der/EngA GTPase function. May play a role in ribosome biogenesis. This is Der GTPase-activating protein YihI from Yersinia pseudotuberculosis serotype O:1b (strain IP 31758).